We begin with the raw amino-acid sequence, 142 residues long: Large ribosomal subunit protein uL13 (142 aa).

This sequence belongs to the universal ribosomal protein uL13 family. In terms of assembly, part of the 50S ribosomal subunit.

In terms of biological role, this protein is one of the early assembly proteins of the 50S ribosomal subunit, although it is not seen to bind rRNA by itself. It is important during the early stages of 50S assembly. The sequence is that of Large ribosomal subunit protein uL13 from Cupriavidus necator (strain ATCC 17699 / DSM 428 / KCTC 22496 / NCIMB 10442 / H16 / Stanier 337) (Ralstonia eutropha).